A 51-amino-acid chain; its full sequence is Cuticle protein CP575 (51 aa).

Positions 1 to 51 (GDIIDVDNDLFEHEQDGVAGTSVHGEYEAYDAYGNEYEVKYIADHLGFRVL) constitute a Chitin-binding type R&amp;R domain.

In terms of tissue distribution, calcified shell.

The chain is Cuticle protein CP575 from Cancer pagurus (Rock crab).